Consider the following 704-residue polypeptide: Polyribonucleotide nucleotidyltransferase (704 aa).

Residues aspartate 486 and aspartate 492 each coordinate Mg(2+). One can recognise a KH domain in the interval proline 553–isoleucine 612. In terms of domain architecture, S1 motif spans glycine 622–lysine 690.

Belongs to the polyribonucleotide nucleotidyltransferase family. Component of the RNA degradosome, which is a multiprotein complex involved in RNA processing and mRNA degradation. Mg(2+) is required as a cofactor.

The protein localises to the cytoplasm. It catalyses the reaction RNA(n+1) + phosphate = RNA(n) + a ribonucleoside 5'-diphosphate. Functionally, involved in mRNA degradation. Catalyzes the phosphorolysis of single-stranded polyribonucleotides processively in the 3'- to 5'-direction. This chain is Polyribonucleotide nucleotidyltransferase, found in Yersinia pseudotuberculosis serotype IB (strain PB1/+).